Consider the following 864-residue polypeptide: Translation initiation factor IF-2 (864 aa).

Residues 140–171 show a composition bias toward basic and acidic residues; that stretch reads DSRSLNTKKENKLKISNKDEQNKKFNQHRESN. The interval 140–179 is disordered; that stretch reads DSRSLNTKKENKLKISNKDEQNKKFNQHRESNSFDLNHKK. Residues 364 to 533 form the tr-type G domain; sequence IRAPVVTIMG…LLQAEMLELK (170 aa). The interval 373–380 is G1; the sequence is GHVDHGKT. GTP is bound at residue 373 to 380; the sequence is GHVDHGKT. A G2 region spans residues 398 to 402; that stretch reads GITQN. Residues 419–422 form a G3 region; the sequence is DTPG. Residues 419 to 423 and 473 to 476 each bind GTP; these read DTPGH and NKID. Residues 473–476 are G4; it reads NKID. Positions 509–511 are G5; sequence SAK.

It belongs to the TRAFAC class translation factor GTPase superfamily. Classic translation factor GTPase family. IF-2 subfamily.

It is found in the cytoplasm. One of the essential components for the initiation of protein synthesis. Protects formylmethionyl-tRNA from spontaneous hydrolysis and promotes its binding to the 30S ribosomal subunits. Also involved in the hydrolysis of GTP during the formation of the 70S ribosomal complex. The polypeptide is Translation initiation factor IF-2 (Buchnera aphidicola subsp. Acyrthosiphon pisum (strain Tuc7)).